We begin with the raw amino-acid sequence, 248 residues long: PACRG-like protein (248 aa).

The residue at position 1 (Met1) is an N-acetylmethionine. The tract at residues 1–72 is disordered; that stretch reads MQRSECSGGV…NPKTINPFGE (72 aa). Composition is skewed to polar residues over residues 14 to 29 and 36 to 45; these read NRAT…SSTQ and VQRSKSSSLT. Ser47 is subject to Phosphoserine.

This Mus musculus (Mouse) protein is PACRG-like protein (Pacrgl).